Here is a 150-residue protein sequence, read N- to C-terminus: Large ribosomal subunit protein bL9 (150 aa).

Belongs to the bacterial ribosomal protein bL9 family.

Its function is as follows. Binds to the 23S rRNA. The sequence is that of Large ribosomal subunit protein bL9 from Streptococcus pneumoniae (strain CGSP14).